A 198-amino-acid chain; its full sequence is MYYPEPIARLIESFSKLPGIGQKTATRLAFYTIGMEDQDVNEFAKNLLSAKRDLRFCSICGNLTESDPCAICTDPTRDRTTILVVEESKDVLAMEKIREYRGLYHVLHGTISPMNGISPDEINVKSLITRLMDSEVKEVIIATNATSDGEATAMYLARMIKPAGIKVTRLAHGLAVGSDIEYADEVTLSKAVENRLEI.

The C4-type zinc finger occupies 57–72 (CSICGNLTESDPCAIC). A Toprim domain is found at 80-175 (TTILVVEESK…KVTRLAHGLA (96 aa)).

This sequence belongs to the RecR family.

Functionally, may play a role in DNA repair. It seems to be involved in an RecBC-independent recombinational process of DNA repair. It may act with RecF and RecO. The chain is Recombination protein RecR from Lactococcus lactis subsp. cremoris (strain SK11).